The sequence spans 294 residues: 4-hydroxy-tetrahydrodipicolinate synthase (294 aa).

Threonine 46 contributes to the pyruvate binding site. Tyrosine 134 acts as the Proton donor/acceptor in catalysis. Residue lysine 163 is the Schiff-base intermediate with substrate of the active site. Isoleucine 205 is a binding site for pyruvate.

Belongs to the DapA family. As to quaternary structure, homotetramer; dimer of dimers.

Its subcellular location is the cytoplasm. The enzyme catalyses L-aspartate 4-semialdehyde + pyruvate = (2S,4S)-4-hydroxy-2,3,4,5-tetrahydrodipicolinate + H2O + H(+). Its pathway is amino-acid biosynthesis; L-lysine biosynthesis via DAP pathway; (S)-tetrahydrodipicolinate from L-aspartate: step 3/4. Catalyzes the condensation of (S)-aspartate-beta-semialdehyde [(S)-ASA] and pyruvate to 4-hydroxy-tetrahydrodipicolinate (HTPA). This Clostridium tetani (strain Massachusetts / E88) protein is 4-hydroxy-tetrahydrodipicolinate synthase.